A 476-amino-acid chain; its full sequence is Replication factor C large subunit (476 aa).

43–50 (GKPGIGKT) provides a ligand contact to ATP. The disordered stretch occupies residues 435 to 476 (LEALRMQEPPVPETPPAAEEQPLEEPQEEKKLAPKQATLDFF).

Belongs to the activator 1 small subunits family. RfcL subfamily. As to quaternary structure, heteromultimer composed of small subunits (RfcS) and large subunits (RfcL).

Part of the RFC clamp loader complex which loads the PCNA sliding clamp onto DNA. This is Replication factor C large subunit from Methanocorpusculum labreanum (strain ATCC 43576 / DSM 4855 / Z).